Reading from the N-terminus, the 339-residue chain is Glycerol-3-phosphate dehydrogenase [NAD(P)+] (339 aa).

Ser15, Tyr16, His36, and Lys110 together coordinate NADPH. Positions 110, 139, and 141 each coordinate sn-glycerol 3-phosphate. Ala143 contributes to the NADPH binding site. Residues Lys195, Asp248, Ser258, Arg259, and Asn260 each coordinate sn-glycerol 3-phosphate. The active-site Proton acceptor is Lys195. Residue Arg259 participates in NADPH binding. Positions 283 and 285 each coordinate NADPH.

The protein belongs to the NAD-dependent glycerol-3-phosphate dehydrogenase family.

The protein resides in the cytoplasm. It catalyses the reaction sn-glycerol 3-phosphate + NAD(+) = dihydroxyacetone phosphate + NADH + H(+). The enzyme catalyses sn-glycerol 3-phosphate + NADP(+) = dihydroxyacetone phosphate + NADPH + H(+). It participates in membrane lipid metabolism; glycerophospholipid metabolism. Catalyzes the reduction of the glycolytic intermediate dihydroxyacetone phosphate (DHAP) to sn-glycerol 3-phosphate (G3P), the key precursor for phospholipid synthesis. This chain is Glycerol-3-phosphate dehydrogenase [NAD(P)+], found in Escherichia coli O17:K52:H18 (strain UMN026 / ExPEC).